The primary structure comprises 630 residues: Chaperone protein HtpG (630 aa).

Residues 1 to 341 (MTQNATSETL…SADLPLNVSR (341 aa)) form an a; substrate-binding region. The b stretch occupies residues 342–558 (EILQESRDVR…QNDLSPHLLR (217 aa)). Residues 559–630 (MLKAAGQEVP…KRLNALLLKV (72 aa)) are c.

The protein belongs to the heat shock protein 90 family. As to quaternary structure, homodimer.

It localises to the cytoplasm. In terms of biological role, molecular chaperone. Has ATPase activity. In Bordetella avium (strain 197N), this protein is Chaperone protein HtpG.